A 382-amino-acid chain; its full sequence is Cytochrome b (382 aa).

4 consecutive transmembrane segments (helical) span residues 28-48 (YGFLLGIIFFIQILTGVFLAS), 72-94 (WCFRYMHATGASLVFLLTYLHIL), 107-127 (SWISGLIIFALFIVTAFIGYV), and 169-189 (FFVLHFILPFVALCIVFIHIF). Positions 78 and 92 each coordinate heme b. Heme b contacts are provided by H173 and H187. Position 192 (H192) interacts with a ubiquinone. 4 helical membrane passes run 214–234 (LLSLDVKGFNNIFILFLLQSI), 274–294 (IPSKTAGLLIVLASLQLLFLL), 317–337 (VPMIWFMCSFYALLWIGCQLP), and 340–360 (IFILYGRLFIISFFSSGLFAL).

It belongs to the cytochrome b family. In terms of assembly, the main subunits of complex b-c1 are: cytochrome b, cytochrome c1 and the Rieske protein. It depends on heme b as a cofactor.

The protein resides in the mitochondrion inner membrane. In terms of biological role, component of the ubiquinol-cytochrome c reductase complex (complex III or cytochrome b-c1 complex) that is part of the mitochondrial respiratory chain. The b-c1 complex mediates electron transfer from ubiquinol to cytochrome c. Contributes to the generation of a proton gradient across the mitochondrial membrane that is then used for ATP synthesis. In Plasmodium vivax (strain Salvador I), this protein is Cytochrome b (MT-CYB).